A 140-amino-acid polypeptide reads, in one-letter code: Large-conductance mechanosensitive channel (140 aa).

The next 2 helical transmembrane spans lie at 16-36 (VVDL…VDSI) and 86-106 (GSFL…FLMV).

This sequence belongs to the MscL family. As to quaternary structure, homopentamer.

The protein localises to the cell inner membrane. Channel that opens in response to stretch forces in the membrane lipid bilayer. May participate in the regulation of osmotic pressure changes within the cell. The protein is Large-conductance mechanosensitive channel of Anaeromyxobacter sp. (strain K).